Reading from the N-terminus, the 188-residue chain is Elongation factor P (188 aa).

Lysine 34 carries the N6-(3,6-diaminohexanoyl)-5-hydroxylysine modification.

This sequence belongs to the elongation factor P family. In terms of processing, may be beta-lysylated on the epsilon-amino group of Lys-34 by the combined action of EpmA and EpmB, and then hydroxylated on the C5 position of the same residue by EpmC (if this protein is present). Lysylation is critical for the stimulatory effect of EF-P on peptide-bond formation. The lysylation moiety may extend toward the peptidyltransferase center and stabilize the terminal 3-CCA end of the tRNA. Hydroxylation of the C5 position on Lys-34 may allow additional potential stabilizing hydrogen-bond interactions with the P-tRNA.

Its subcellular location is the cytoplasm. Its pathway is protein biosynthesis; polypeptide chain elongation. In terms of biological role, involved in peptide bond synthesis. Alleviates ribosome stalling that occurs when 3 or more consecutive Pro residues or the sequence PPG is present in a protein, possibly by augmenting the peptidyl transferase activity of the ribosome. Modification of Lys-34 is required for alleviation. The chain is Elongation factor P from Cronobacter sakazakii (strain ATCC BAA-894) (Enterobacter sakazakii).